Consider the following 482-residue polypeptide: Malvidin galactosylase UGT88C3 (482 aa).

The active-site Proton acceptor is H16. Catalysis depends on D117, which acts as the Charge relay. UDP-binding residues include S279, W345, A349, H366, N370, S371, and E374.

The protein belongs to the UDP-glycosyltransferase family. In terms of tissue distribution, highly expressed in leaves, sheaths, pistils and embryos, observed in stems, stem nodes and panicles, and present at low levels in roots.

It is found in the endoplasmic reticulum. The protein resides in the nucleus. The enzyme catalyses malvidin + UDP-alpha-D-galactose = malvidin 3-O-beta-D-galactoside + UDP + H(+). It functions in the pathway pigment biosynthesis; anthocyanin biosynthesis. Functionally, UDP-glycosyltransferase which uses UDP-galactose and malvidin as substrates to catalyze the biosynthesis of malvidin 3-O-galactoside, an anthocyanin conferring purple pigmentation. The protein is Malvidin galactosylase UGT88C3 of Oryza sativa subsp. japonica (Rice).